Here is a 434-residue protein sequence, read N- to C-terminus: Methylenetetrahydrofolate--tRNA-(uracil-5-)-methyltransferase TrmFO (434 aa).

An FAD-binding site is contributed by 9–14 (GAGLAG).

The protein belongs to the MnmG family. TrmFO subfamily. It depends on FAD as a cofactor.

It is found in the cytoplasm. The enzyme catalyses uridine(54) in tRNA + (6R)-5,10-methylene-5,6,7,8-tetrahydrofolate + NADH + H(+) = 5-methyluridine(54) in tRNA + (6S)-5,6,7,8-tetrahydrofolate + NAD(+). The catalysed reaction is uridine(54) in tRNA + (6R)-5,10-methylene-5,6,7,8-tetrahydrofolate + NADPH + H(+) = 5-methyluridine(54) in tRNA + (6S)-5,6,7,8-tetrahydrofolate + NADP(+). Its function is as follows. Catalyzes the folate-dependent formation of 5-methyl-uridine at position 54 (M-5-U54) in all tRNAs. The sequence is that of Methylenetetrahydrofolate--tRNA-(uracil-5-)-methyltransferase TrmFO from Bacillus licheniformis (strain ATCC 14580 / DSM 13 / JCM 2505 / CCUG 7422 / NBRC 12200 / NCIMB 9375 / NCTC 10341 / NRRL NRS-1264 / Gibson 46).